We begin with the raw amino-acid sequence, 229 residues long: Potassium/proton antiporter CemA (229 aa).

A run of 3 helical transmembrane segments spans residues 7-27 (FTPL…SLSF), 107-127 (ILHF…SLLG), and 189-209 (IISG…KYWI).

This sequence belongs to the CemA family.

The protein resides in the plastid. It is found in the chloroplast inner membrane. It catalyses the reaction K(+)(in) + H(+)(out) = K(+)(out) + H(+)(in). Its function is as follows. Contributes to K(+)/H(+) antiport activity by supporting proton efflux to control proton extrusion and homeostasis in chloroplasts in a light-dependent manner to modulate photosynthesis. Prevents excessive induction of non-photochemical quenching (NPQ) under continuous-light conditions. Indirectly promotes efficient inorganic carbon uptake into chloroplasts. The sequence is that of Potassium/proton antiporter CemA from Lactuca sativa (Garden lettuce).